The following is a 128-amino-acid chain: Probable 4-amino-4-deoxy-L-arabinose-phosphoundecaprenol flippase subunit ArnF (128 aa).

Residues Met-1–Gly-2 are Cytoplasmic-facing. The helical transmembrane segment at Leu-3–Ala-23 threads the bilayer. The Periplasmic portion of the chain corresponds to Ala-24 to Asp-35. The chain crosses the membrane as a helical span at residues Phe-36–Gly-56. Over Tyr-57 to Ala-76 the chain is Cytoplasmic. Residues Tyr-77 to Trp-97 form a helical membrane-spanning segment. Residues Glu-98–Thr-100 are Periplasmic-facing. A helical membrane pass occupies residues Phe-101–Leu-121. At Pro-122 to Tyr-128 the chain is on the cytoplasmic side.

This sequence belongs to the ArnF family. As to quaternary structure, heterodimer of ArnE and ArnF.

Its subcellular location is the cell inner membrane. It functions in the pathway bacterial outer membrane biogenesis; lipopolysaccharide biosynthesis. Functionally, translocates 4-amino-4-deoxy-L-arabinose-phosphoundecaprenol (alpha-L-Ara4N-phosphoundecaprenol) from the cytoplasmic to the periplasmic side of the inner membrane. In Escherichia coli O9:H4 (strain HS), this protein is Probable 4-amino-4-deoxy-L-arabinose-phosphoundecaprenol flippase subunit ArnF.